A 415-amino-acid chain; its full sequence is Serine hydroxymethyltransferase 1 (415 aa).

(6S)-5,6,7,8-tetrahydrofolate is bound by residues L117 and 121–123; that span reads GHL. K225 carries the N6-(pyridoxal phosphate)lysine modification. 349–351 is a (6S)-5,6,7,8-tetrahydrofolate binding site; that stretch reads SPF.

The protein belongs to the SHMT family. In terms of assembly, homodimer. Pyridoxal 5'-phosphate serves as cofactor.

The protein resides in the cytoplasm. The enzyme catalyses (6R)-5,10-methylene-5,6,7,8-tetrahydrofolate + glycine + H2O = (6S)-5,6,7,8-tetrahydrofolate + L-serine. The protein operates within one-carbon metabolism; tetrahydrofolate interconversion. Its pathway is amino-acid biosynthesis; glycine biosynthesis; glycine from L-serine: step 1/1. Catalyzes the reversible interconversion of serine and glycine with tetrahydrofolate (THF) serving as the one-carbon carrier. This reaction serves as the major source of one-carbon groups required for the biosynthesis of purines, thymidylate, methionine, and other important biomolecules. Also exhibits THF-independent aldolase activity toward beta-hydroxyamino acids, producing glycine and aldehydes, via a retro-aldol mechanism. The protein is Serine hydroxymethyltransferase 1 of Sulfurimonas denitrificans (strain ATCC 33889 / DSM 1251) (Thiomicrospira denitrificans (strain ATCC 33889 / DSM 1251)).